The sequence spans 341 residues: MSLVGQMYKREKPIPEWKTLMLRELEELFSKHRVVLFADLTGTPTFVVQRVRKKLWKKYPMMVAKKRIILRAMKAAGLELDDNLLDDLVRGQMLLVFADGNPFKIVKEVEKEKVAMPVKPGDKAETEIRIPEGMTNLTPGPILSVFGKLRIQYQVRGGKIYIAKETVVAKPGDVISEDLAGLLMALGIRPIEKGVRVKFAIDGGVLITEDLLRPDIEAFRGDVIDAAKEALGLATEIVYMPVPEAVESAIVKAALAASALAAETGFIAPGTVEDVVRKAIAEEAAVVALLGDKARELGIEEAAPAAAPAAEEKAEEEKKEEEEEKKEDQELSGLDSIFGGF.

The disordered stretch occupies residues 301 to 341; sequence EAAPAAAPAAEEKAEEEKKEEEEEKKEDQELSGLDSIFGGF.

Belongs to the universal ribosomal protein uL10 family. In terms of assembly, part of the 50S ribosomal subunit. Forms part of the ribosomal stalk which helps the ribosome interact with GTP-bound translation factors. Forms a heptameric L10(L12)2(L12)2(L12)2 complex, where L10 forms an elongated spine to which the L12 dimers bind in a sequential fashion.

In terms of biological role, forms part of the ribosomal stalk, playing a central role in the interaction of the ribosome with GTP-bound translation factors. This Aeropyrum pernix (strain ATCC 700893 / DSM 11879 / JCM 9820 / NBRC 100138 / K1) protein is Large ribosomal subunit protein uL10.